Consider the following 481-residue polypeptide: Ribosomal protein uS12 methylthiotransferase RimO (481 aa).

The 117-residue stretch at 8–124 (MTVHLVSMGC…IAGRLRTILD (117 aa)) folds into the MTTase N-terminal domain. The [4Fe-4S] cluster site is built by C17, C53, and C87. The interval 148–188 (PTARAEVSVPGHGTAPDLSASVTPDSGPRATRRRLGTGPSA) is disordered. The Radical SAM core domain maps to 182–413 (LGTGPSAPLK…DLTDELVSQR (232 aa)). [4Fe-4S] cluster is bound by residues C196, C200, and C203. The 66-residue stretch at 415–480 (EDRIGTRGRV…GVDLVARPAN (66 aa)) folds into the TRAM domain.

The protein belongs to the methylthiotransferase family. RimO subfamily. [4Fe-4S] cluster serves as cofactor.

It localises to the cytoplasm. The enzyme catalyses L-aspartate(89)-[ribosomal protein uS12]-hydrogen + (sulfur carrier)-SH + AH2 + 2 S-adenosyl-L-methionine = 3-methylsulfanyl-L-aspartate(89)-[ribosomal protein uS12]-hydrogen + (sulfur carrier)-H + 5'-deoxyadenosine + L-methionine + A + S-adenosyl-L-homocysteine + 2 H(+). Catalyzes the methylthiolation of an aspartic acid residue of ribosomal protein uS12. This chain is Ribosomal protein uS12 methylthiotransferase RimO, found in Cutibacterium acnes (strain DSM 16379 / KPA171202) (Propionibacterium acnes).